A 165-amino-acid chain; its full sequence is MAFSRLSFAASLIVFSSLIISSVAYYGNEADPETGKLIPIAVEGIIKCKSGGKTYPIQGATARIACVKVDAYGNELVPISILSSKTDAKGYFIATIFPSQLRAGRTVTKCKTYLYKSPLADCDFPTDVNKGVRGQPLSTYRILQDKSFKLYWAGPFFYTSEPTYY.

An N-terminal signal peptide occupies residues 1–24 (MAFSRLSFAASLIVFSSLIISSVA).

It belongs to the plant proline-rich protein superfamily. Root hair and seed specific expression. Also observed in other tissues including siliques, roots and flowers.

Its subcellular location is the secreted. The protein resides in the cell wall. Functionally, contributes to cell wall structure in root hairs and seeds, especially in phosphate (Pi) deprivation conditions or in the presence of ethylene. Particularly important in maternal tissues (pericarps and seed coats) during seed development, especially under stress conditions. Confers thermotolerance in seed germination rate. The chain is Protein SEED AND ROOT HAIR PROTECTIVE PROTEIN from Arabidopsis thaliana (Mouse-ear cress).